A 191-amino-acid polypeptide reads, in one-letter code: Glycerol-3-phosphate acyltransferase (191 aa).

5 helical membrane passes run 3 to 23, 51 to 71, 78 to 98, 108 to 128, and 150 to 170; these read YLIVALSSYLLGSIPFGFILT, TLGYATLLLDITKAVLPVLYV, YIFIASLSAFLGHVFPIWLKF, VGILFSINIFLGLVFIISWAV, and YLIVFENYNSIFFIIMFVLIF.

It belongs to the PlsY family. As to quaternary structure, probably interacts with PlsX.

Its subcellular location is the cell inner membrane. It carries out the reaction an acyl phosphate + sn-glycerol 3-phosphate = a 1-acyl-sn-glycero-3-phosphate + phosphate. It functions in the pathway lipid metabolism; phospholipid metabolism. In terms of biological role, catalyzes the transfer of an acyl group from acyl-phosphate (acyl-PO(4)) to glycerol-3-phosphate (G3P) to form lysophosphatidic acid (LPA). This enzyme utilizes acyl-phosphate as fatty acyl donor, but not acyl-CoA or acyl-ACP. The sequence is that of Glycerol-3-phosphate acyltransferase from Pelagibacter ubique (strain HTCC1062).